A 360-amino-acid polypeptide reads, in one-letter code: Photosystem II protein D1 2 (360 aa).

3 consecutive transmembrane segments (helical) span residues tyrosine 29–isoleucine 46, histidine 118–leucine 133, and tryptophan 142–alanine 156. Residue histidine 118 participates in chlorophyll a binding. Tyrosine 126 is a pheophytin a binding site. Aspartate 170 and glutamate 189 together coordinate [CaMn4O5] cluster. The helical transmembrane segment at phenylalanine 197–leucine 218 threads the bilayer. Residue histidine 198 participates in chlorophyll a binding. Residues histidine 215 and serine 264 to phenylalanine 265 contribute to the a quinone site. Histidine 215 provides a ligand contact to Fe cation. A Fe cation-binding site is contributed by histidine 272. Residues phenylalanine 274 to leucine 288 form a helical membrane-spanning segment. [CaMn4O5] cluster-binding residues include histidine 332, glutamate 333, aspartate 342, and alanine 344. A propeptide spanning residues alanine 345–glycine 360 is cleaved from the precursor.

It belongs to the reaction center PufL/M/PsbA/D family. As to quaternary structure, PSII is composed of 1 copy each of membrane proteins PsbA, PsbB, PsbC, PsbD, PsbE, PsbF, PsbH, PsbI, PsbJ, PsbK, PsbL, PsbM, PsbT, PsbX, PsbY, PsbZ, Psb30/Ycf12, peripheral proteins PsbO, CyanoQ (PsbQ), PsbU, PsbV and a large number of cofactors. It forms dimeric complexes. The D1/D2 heterodimer binds P680, chlorophylls that are the primary electron donor of PSII, and subsequent electron acceptors. It shares a non-heme iron and each subunit binds pheophytin, quinone, additional chlorophylls, carotenoids and lipids. D1 provides most of the ligands for the Mn4-Ca-O5 cluster of the oxygen-evolving complex (OEC). There is also a Cl(-1) ion associated with D1 and D2, which is required for oxygen evolution. The PSII complex binds additional chlorophylls, carotenoids and specific lipids. is required as a cofactor. In terms of processing, tyr-161 forms a radical intermediate that is referred to as redox-active TyrZ, YZ or Y-Z. Post-translationally, C-terminally processed by CtpA; processing is essential to allow assembly of the oxygen-evolving complex and thus photosynthetic growth.

Its subcellular location is the cellular thylakoid membrane. The enzyme catalyses 2 a plastoquinone + 4 hnu + 2 H2O = 2 a plastoquinol + O2. Photosystem II (PSII) is a light-driven water:plastoquinone oxidoreductase that uses light energy to abstract electrons from H(2)O, generating O(2) and a proton gradient subsequently used for ATP formation. It consists of a core antenna complex that captures photons, and an electron transfer chain that converts photonic excitation into a charge separation. The D1/D2 (PsbA/PsbD) reaction center heterodimer binds P680, the primary electron donor of PSII as well as several subsequent electron acceptors. This Synechococcus elongatus (strain ATCC 33912 / PCC 7942 / FACHB-805) (Anacystis nidulans R2) protein is Photosystem II protein D1 2.